We begin with the raw amino-acid sequence, 307 residues long: NAD kinase 1 (307 aa).

Asp-67 (proton acceptor) is an active-site residue. NAD(+) is bound by residues 67 to 68 (DG), 149 to 150 (ND), Arg-179, and Asp-181.

This sequence belongs to the NAD kinase family. Requires a divalent metal cation as cofactor.

It is found in the cytoplasm. The catalysed reaction is NAD(+) + ATP = ADP + NADP(+) + H(+). Involved in the regulation of the intracellular balance of NAD and NADP, and is a key enzyme in the biosynthesis of NADP. Catalyzes specifically the phosphorylation on 2'-hydroxyl of the adenosine moiety of NAD to yield NADP. The protein is NAD kinase 1 of Prochlorococcus marinus (strain SARG / CCMP1375 / SS120).